An 83-amino-acid chain; its full sequence is CDC42 small effector protein 2 (83 aa).

Residues Cys-10 and Cys-11 are each lipidated (S-palmitoyl cysteine). Residues Ile-28–Gly-41 enclose the CRIB domain. 2 positions are modified to phosphoserine: Ser-42 and Ser-51.

The protein belongs to the CDC42SE/SPEC family. In terms of assembly, interacts with CDC42 (in GTP-bound form). Interacts weakly with RAC1 and not at all with RHOA.

The protein localises to the cytoplasm. Its subcellular location is the cytoskeleton. The protein resides in the cell membrane. It localises to the cell projection. It is found in the phagocytic cup. Probably involved in the organization of the actin cytoskeleton by acting downstream of CDC42, inducing actin filament assembly. Alters CDC42-induced cell shape changes. In activated T-cells, may play a role in CDC42-mediated F-actin accumulation at the immunological synapse. May play a role in early contractile events in phagocytosis in macrophages. The protein is CDC42 small effector protein 2 (Cdc42se2) of Rattus norvegicus (Rat).